Here is a 70-residue protein sequence, read N- to C-terminus: Small ribosomal subunit protein bS21 (70 aa).

Belongs to the bacterial ribosomal protein bS21 family.

The chain is Small ribosomal subunit protein bS21 from Campylobacter curvus (strain 525.92).